The chain runs to 553 residues: Carboxypeptidase Y homolog A (553 aa).

A signal peptide spans 1–17 (MRVLSTTLLIGAAAAAV). Positions 18–134 (SPPQQVLQAP…RLEAFDLRVK (117 aa)) are excised as a propeptide. Cystine bridges form between Cys-189/Cys-428, Cys-323/Cys-337, Cys-347/Cys-370, Cys-354/Cys-363, and Cys-392/Cys-398. Asn-220 carries N-linked (GlcNAc...) asparagine glycosylation. Residue Ser-276 is part of the active site. Residue Asp-467 is part of the active site. Asn-518 is a glycosylation site (N-linked (GlcNAc...) asparagine). His-529 is a catalytic residue.

It belongs to the peptidase S10 family.

It localises to the vacuole. It catalyses the reaction Release of a C-terminal amino acid with broad specificity.. Its function is as follows. Vacuolar carboxypeptidase involved in degradation of small peptides. Digests preferentially peptides containing an aliphatic or hydrophobic residue in P1' position, as well as methionine, leucine or phenylalanine in P1 position of ester substrate. The chain is Carboxypeptidase Y homolog A (cpyA) from Talaromyces stipitatus (strain ATCC 10500 / CBS 375.48 / QM 6759 / NRRL 1006) (Penicillium stipitatum).